Reading from the N-terminus, the 1323-residue chain is Inositol hexakisphosphate and diphosphoinositol-pentakisphosphate kinase (1323 aa).

Residue 26–27 (RK) participates in substrate binding. ATP contacts are provided by residues R109, K162, H169, R188, 212–215 (EEFI), and 221–223 (DVK). 188–189 (RK) is a substrate binding site. Residues K223 and R237 each contribute to the substrate site. Residues D284 and 296–298 (DVN) each bind ATP. 301-304 (SFVK) is a binding site for substrate. Residues 355-426 (TTPSGKLAEL…VLELARALVI (72 aa)) are polyphosphoinositide-binding domain. 2 stretches are compositionally biased toward polar residues: residues 933 to 947 (FNLSTNPKPATSSRS) and 977 to 992 (VTPTQLSTPSVTNDDL). Disordered stretches follow at residues 933–1022 (FNLS…SEDD), 1043–1107 (AMAD…GGGK), and 1134–1155 (IVIPTPVPSTTTAVVEDEASER). Low complexity predominate over residues 993–1006 (SISSNAESTAAEST). Over residues 1062-1074 (KSMEEGDKPHGEW) the composition is skewed to basic and acidic residues. Low complexity predominate over residues 1090 to 1101 (SNEMESNNESME).

It belongs to the histidine acid phosphatase family. VIP1 subfamily.

The protein resides in the cytoplasm. The protein localises to the cytosol. The enzyme catalyses 1D-myo-inositol hexakisphosphate + ATP = 1-diphospho-1D-myo-inositol 2,3,4,5,6-pentakisphosphate + ADP. It carries out the reaction 5-diphospho-1D-myo-inositol 1,2,3,4,6-pentakisphosphate + ATP + H(+) = 1,5-bis(diphospho)-1D-myo-inositol 2,3,4,6-tetrakisphosphate + ADP. In terms of biological role, bifunctional inositol kinase that acts in concert with the IP6K kinases to synthesize the diphosphate group-containing inositol pyrophosphates diphosphoinositol pentakisphosphate, PP-InsP5, and bis-diphosphoinositol tetrakisphosphate, (PP)2-InsP4. PP-InsP5 and (PP)2-InsP4, also respectively called InsP7 and InsP8, may regulate a variety of cellular processes, including apoptosis, vesicle trafficking, cytoskeletal dynamics, and exocytosis. Phosphorylates inositol hexakisphosphate (InsP6) at position 1 to produce PP-InsP5 which is in turn phosphorylated by IP6Ks to produce (PP)2-InsP4. Alternatively, phosphorylates PP-InsP5 at position 1, produced by IP6Ks from InsP6, to produce (PP)2-InsP4. This Caenorhabditis elegans protein is Inositol hexakisphosphate and diphosphoinositol-pentakisphosphate kinase.